The chain runs to 449 residues: Hyaluronidase (449 aa).

The N-terminal stretch at 1-23 (MYHIWIKFLAAWIFLKRFNGVHV) is a signal peptide. Cystine bridges form between C47-C340 and C211-C227. Residues N67, N103, and N111 are each glycosylated (N-linked (GlcNAc...) asparagine). E135 serves as the catalytic Proton donor. N153 carries N-linked (GlcNAc...) asparagine glycosylation. The N-linked (GlcNAc...) asparagine glycan is linked to N357. Disulfide bonds link C365-C376, C370-C427, and C429-C438. N401 carries N-linked (GlcNAc...) asparagine glycosylation. The EGF-like domain occupies 427–438 (CQCYQGWKGLYC).

Belongs to the glycosyl hydrolase 56 family. In terms of assembly, monomer. Expressed by the venom gland.

The protein resides in the secreted. It catalyses the reaction Random hydrolysis of (1-&gt;4)-linkages between N-acetyl-beta-D-glucosamine and D-glucuronate residues in hyaluronate.. In terms of biological role, snake venom endo-hyaluronidase that degrades hyaluronan to smaller oligosaccharide fragments. In venom, it is not toxic by itself, but increases the diffusion of other venom proteins by degrading the extracellular matrix. In addition, it displays antiedematogenic activity. In Echis pyramidum leakeyi (Leakey's carpet viper), this protein is Hyaluronidase.